A 218-amino-acid polypeptide reads, in one-letter code: Hypoxanthine-guanine phosphoribosyltransferase (218 aa).

A2 is modified (N-acetylalanine). K69 provides a ligand contact to GMP. N6-acetyllysine is present on K103. K115 participates in a covalent cross-link: Glycyl lysine isopeptide (Lys-Gly) (interchain with G-Cter in SUMO1); alternate. K115 is covalently cross-linked (Glycyl lysine isopeptide (Lys-Gly) (interchain with G-Cter in SUMO2); alternate). Residues 134-142 (EDIIDTGKT), K166, 186-188 (KFV), and D194 contribute to the GMP site. D138 acts as the Proton acceptor in catalysis. At T142 the chain carries Phosphothreonine. D194 lines the Mg(2+) pocket.

This sequence belongs to the purine/pyrimidine phosphoribosyltransferase family. In terms of assembly, homotetramer. Mg(2+) serves as cofactor.

It is found in the cytoplasm. The enzyme catalyses IMP + diphosphate = hypoxanthine + 5-phospho-alpha-D-ribose 1-diphosphate. It carries out the reaction GMP + diphosphate = guanine + 5-phospho-alpha-D-ribose 1-diphosphate. It functions in the pathway purine metabolism; IMP biosynthesis via salvage pathway; IMP from hypoxanthine: step 1/1. Functionally, converts guanine to guanosine monophosphate, and hypoxanthine to inosine monophosphate. Transfers the 5-phosphoribosyl group from 5-phosphoribosylpyrophosphate onto the purine. Plays a central role in the generation of purine nucleotides through the purine salvage pathway. This Homo sapiens (Human) protein is Hypoxanthine-guanine phosphoribosyltransferase (HPRT1).